The following is a 310-amino-acid chain: Ribosomal protein L11 methyltransferase (310 aa).

Residues threonine 153, glycine 174, aspartate 196, and asparagine 239 each coordinate S-adenosyl-L-methionine.

The protein belongs to the methyltransferase superfamily. PrmA family.

Its subcellular location is the cytoplasm. The catalysed reaction is L-lysyl-[protein] + 3 S-adenosyl-L-methionine = N(6),N(6),N(6)-trimethyl-L-lysyl-[protein] + 3 S-adenosyl-L-homocysteine + 3 H(+). In terms of biological role, methylates ribosomal protein L11. The polypeptide is Ribosomal protein L11 methyltransferase (Janthinobacterium sp. (strain Marseille) (Minibacterium massiliensis)).